Reading from the N-terminus, the 200-residue chain is Small ribosomal subunit protein uS4c (200 aa).

The tract at residues 20 to 42 (GLTRKTTTRTSRPGQHGTQARKP) is disordered. The span at 23–37 (RKTTTRTSRPGQHGT) shows a compositional bias: polar residues. The 63-residue stretch at 90-152 (MRLDNVIFRL…PKSQSIVKNY (63 aa)) folds into the S4 RNA-binding domain.

It belongs to the universal ribosomal protein uS4 family. Part of the 30S ribosomal subunit. Contacts protein S5. The interaction surface between S4 and S5 is involved in control of translational fidelity.

Its subcellular location is the plastid. It is found in the chloroplast. One of the primary rRNA binding proteins, it binds directly to 16S rRNA where it nucleates assembly of the body of the 30S subunit. Functionally, with S5 and S12 plays an important role in translational accuracy. In Guillardia theta (Cryptophyte), this protein is Small ribosomal subunit protein uS4c (rps4).